A 262-amino-acid polypeptide reads, in one-letter code: Acidic leucine-rich nuclear phosphoprotein 32 family member B (262 aa).

4 LRR repeats span residues 16–40 (PGEVKELVLDNCRSDDGKIVGLSSD), 43–64 (NLEFLSMINVNLLSISNLPKLN), 65–87 (KLRKLELSDNRISGGLEVLAERT), and 89–110 (NLTHLNLSGNKIKDINTLEPLK). The 39-residue stretch at 123–161 (CEVTMLINYRESVFTLLPQLTYLDGFDADEQEAPDSDPE) folds into the LRRCT domain. The segment covering 150–233 (ADEQEAPDSD…EDEEDDEADD (84 aa)) has biased composition (acidic residues). The interval 150–262 (ADEQEAPDSD…PEDEEDDEDD (113 aa)) is disordered. Residues 240 to 243 (KRKR) carry the Nuclear localization signal motif. Residues 247–262 (DEGEEDPEDEEDDEDD) are compositionally biased toward acidic residues.

Belongs to the ANP32 family. In terms of assembly, interacts with histones H3 and H4. Interacts with KLF5; this interaction induces promoter region-specific histone incorporation and inhibition of histone acetylation by ANP32B. Post-translationally, directly cleaved by caspase-3/CASP3.

It localises to the nucleus. Multifunctional protein that is involved in the regulation of many processes including cell proliferation, apoptosis, cell cycle progression or transcription. Regulates the proliferation of neuronal stem cells, differentiation of leukemic cells and progression from G1 to S phase of the cell cycle. As negative regulator of caspase-3-dependent apoptosis, may act as an antagonist of ANP32A in regulating tissue homeostasis. Exhibits histone chaperone properties, able to recruit histones to certain promoters, thus regulating the transcription of specific genes. Also plays an essential role in the nucleocytoplasmic transport of specific mRNAs via the uncommon nuclear mRNA export receptor XPO1/CRM1. This chain is Acidic leucine-rich nuclear phosphoprotein 32 family member B (ANP32B), found in Gallus gallus (Chicken).